Reading from the N-terminus, the 343-residue chain is Aspartate-semialdehyde dehydrogenase (343 aa).

NADP(+)-binding positions include 13–16 (TGAV) and 41–42 (KS). Phosphate is bound at residue arginine 103. The active-site Acyl-thioester intermediate is the cysteine 134. Glutamine 161 provides a ligand contact to substrate. 164–165 (SG) contributes to the NADP(+) binding site. Lysine 220 is a binding site for phosphate. Arginine 241 lines the substrate pocket. The active-site Proton acceptor is histidine 248. An NADP(+)-binding site is contributed by glutamine 321.

Belongs to the aspartate-semialdehyde dehydrogenase family. Homodimer.

It catalyses the reaction L-aspartate 4-semialdehyde + phosphate + NADP(+) = 4-phospho-L-aspartate + NADPH + H(+). The protein operates within amino-acid biosynthesis; L-lysine biosynthesis via DAP pathway; (S)-tetrahydrodipicolinate from L-aspartate: step 2/4. It participates in amino-acid biosynthesis; L-methionine biosynthesis via de novo pathway; L-homoserine from L-aspartate: step 2/3. Its pathway is amino-acid biosynthesis; L-threonine biosynthesis; L-threonine from L-aspartate: step 2/5. Its function is as follows. Catalyzes the NADPH-dependent formation of L-aspartate-semialdehyde (L-ASA) by the reductive dephosphorylation of L-aspartyl-4-phosphate. The chain is Aspartate-semialdehyde dehydrogenase from Campylobacter jejuni subsp. jejuni serotype O:2 (strain ATCC 700819 / NCTC 11168).